We begin with the raw amino-acid sequence, 307 residues long: MKIIFMGSPEFAIPALKELVLSKHNVIAVFTSKPKKRDRYLNIQRSPIHKLASALSIPVYTPDSLKTNDVQNLIATFDADVIVVAAYGLIIPKAILKMKKYGCINIHPSMLPKYRGAAPIQRTIINGEKETAVCIIQMDQGVDTGDIILCQKFHLAKNICFSELHDQCAKVGAKLVVKAINYIHTLPRIPQSQDRASYAHKLSKSESKINWYESAYTIDCKIRGMNPWPGTFFTHNNCNIKVLKAKIVNNSHNLQPGTVKIANNDKLLVACQEHFLELLSLQLPGRKELSSDQFLCGYHILPDTVLQ.

Residue 109–112 (SMLP) coordinates (6S)-5,6,7,8-tetrahydrofolate.

The protein belongs to the Fmt family.

It carries out the reaction L-methionyl-tRNA(fMet) + (6R)-10-formyltetrahydrofolate = N-formyl-L-methionyl-tRNA(fMet) + (6S)-5,6,7,8-tetrahydrofolate + H(+). In terms of biological role, attaches a formyl group to the free amino group of methionyl-tRNA(fMet). The formyl group appears to play a dual role in the initiator identity of N-formylmethionyl-tRNA by promoting its recognition by IF2 and preventing the misappropriation of this tRNA by the elongation apparatus. The polypeptide is Methionyl-tRNA formyltransferase (Orientia tsutsugamushi (strain Boryong) (Rickettsia tsutsugamushi)).